Consider the following 1352-residue polypeptide: MTLLMCLLMSLLIFVRGCDSQFVDMSPASNTSECLESQVDAAAFSKLMWPYPIDPSKVDGIIYPLGRTYSNITLAYTGLFPLQGDLGSQYLYSVSHAVGHDGDPTKAYISNYSLLVNDFDNGFVVRIGAAANSTGTIVISPSVNTKIKKAYPAFILGSSLTNTSAGQPLYANYSLTIIPDGCGTVLHAFYCILKPRTVNRCPSGTGYVSYFIYETVHNDCQSTINRNASLNSFKSFFDLVNCTFFNSWDITADETKEWFGITQDTQGVHLYSSRKGDLYGGNMFRFATLPVYEGIKYYTVIPRSFRSKANKREAWAAFYVYKLHQLTYLLDFSVDGYIRRAIDCGHDDLSQLHCSYTSFEVDTGVYSVSSYEASATGTFIEQPNATECDFSPMLTGVAPQVYNFKRLVFSNCNYNLTKLLSLFAVDEFSCNGISPDSIARGCYSTLTVDYFAYPLSMKSYIRPGSAGNIPLYNYKQSFANPTCRVMASVLANVTITKPHAYGYISKCSRLTGANQDVETPLYINPGEYSICRDFSPGGFSEDGQVFKRTLTQFEGGGLLIGVGTRVPMTDNLQMSFIISVQYGTGTDSVCPMLDLGDSLTITNRLGKCVDYSLYGVTGRGVFQNCTAVGVKQQRFVYDSFDNLVGYYSDDGNYYCVRPCVSVPVSVIYDKSTNLHATLFGSVACEHVTTMMSQFSRLTQSNLRRRDSNIPLQTAVGCVIGLSNNSLVVSDCKLPLGQSLCAVPPVSTFRSYSASQFQLAVLNYTSPIVVTPINSSGFTAAIPTNFSFSVTQEYIETSIQKVTVDCKQYVCNGFTRCEKLLVEYGQFCSKINQALHGANLRQDESVYSLYSNIKTTSTQTLEYGLNGDFNLTLLQVPQIGGSSSSYRSAIEDLLFDKVTIADPGYMQGYDDCMKQGPQSARDLICAQYVSGYKVLPPLYDPNMEAAYTSSLLGSIAGAGWTAGLSSFAAIPFAQSMFYRLNGVGITQQVLSENQKLIANKFNQALGAMQTGFTTSNLAFSKVQDAVNANAQALSKLASELSNTFGAISSSISDILARLDTVEQDAQIDRLINGRLISLNAFVSQQLVRSETAARSAQLASDKVNECVKSQSKRNGFCGSGTHIVSFVVNAPNGFYFFHVGYVPTNYTNVTAAYGLCNNNNPPLCIAPIDGYFITNQTTTYSVDTEWYYTGSSFYKPEPITQANSRYVSSDVKFDKLENNLPPPLLENSTDVDFKDELEEFFKNVTSHGPNFAEISKINTTLLDLSDEMAMLQEVVKQLNDSYIDLKELGNYTYYNKWPWYVWLGFIAGLVALLLCVFFLLCCTGCGTSCLGKMKCKNCCDSYEEYDVEKIHVH.

A signal peptide spans 1–12 (MTLLMCLLMSLL). The Extracellular portion of the chain corresponds to 13–1297 (IFVRGCDSQF…GNYTYYNKWP (1285 aa)). Positions 21 to 356 (QFVDMSPASN…DDLSQLHCSY (336 aa)) constitute a BetaCoV S1-NTD domain. N-linked (GlcNAc...) asparagine; by host glycans are attached at residues N30, N71, N111, N132, N162, N172, N227, and N241. 2 disulfides stabilise this stretch: C191–C242 and C344–C354. An N-linked (GlcNAc...) asparagine; by host glycan is attached at N384. In terms of domain architecture, BetaCoV S1-CTD spans 386 to 592 (TECDFSPMLT…GTGTDSVCPM (207 aa)). Cysteines 388 and 412 form a disulfide. N415 is a glycosylation site (N-linked (GlcNAc...) asparagine; by host). 2 disulfide bridges follow: C430–C483 and C442–C590. N-linked (GlcNAc...) asparagine; by host glycosylation is found at N492, N624, N723, N762, N773, N784, and N869. Fusion peptide regions lie at residues 887 to 908 (SAIE…MQGY) and 906 to 928 (QGYD…AQYV). Cysteines 911 and 924 form a disulfide. The segment at 993-1043 (QKLIANKFNQALGAMQTGFTTSNLAFSKVQDAVNANAQALSKLASELSNTF) is heptad repeat 1. Residues 1022 to 1066 (QDAVNANAQALSKLASELSNTFGAISSSISDILARLDTVEQDAQI) adopt a coiled-coil conformation. 8 N-linked (GlcNAc...) asparagine; by host glycosylation sites follow: N1144, N1147, N1174, N1226, N1242, N1257, N1278, and N1289. The interval 1247 to 1286 (GPNFAEISKINTTLLDLSDEMAMLQEVVKQLNDSYIDLKE) is heptad repeat 2. Positions 1259–1287 (TLLDLSDEMAMLQEVVKQLNDSYIDLKEL) form a coiled coil. Residues 1298–1318 (WYVWLGFIAGLVALLLCVFFL) traverse the membrane as a helical segment. At 1319 to 1352 (LCCTGCGTSCLGKMKCKNCCDSYEEYDVEKIHVH) the chain is on the cytoplasmic side. A KxHxx motif is present at residues 1350–1352 (HVH).

This sequence belongs to the betacoronaviruses spike protein family. In terms of assembly, homotrimer; each monomer consists of a S1 and a S2 subunit. The resulting peplomers protrude from the virus surface as spikes. Post-translationally, specific enzymatic cleavages in vivo yield mature proteins. The precursor is processed into S1 and S2 by host cell furin or another cellular protease to yield the mature S1 and S2 proteins. Additionally, a second cleavage leads to the release of a fusion peptide after viral attachment to host cell receptor. In terms of processing, the cytoplasmic Cys-rich domain is palmitoylated. Spike glycoprotein is digested within host endosomes.

It localises to the virion membrane. Its subcellular location is the host endoplasmic reticulum-Golgi intermediate compartment membrane. It is found in the host cell membrane. Attaches the virion to the cell membrane by interacting with host receptor, initiating the infection. In terms of biological role, mediates fusion of the virion and cellular membranes by acting as a class I viral fusion protein. Under the current model, the protein has at least three conformational states: pre-fusion native state, pre-hairpin intermediate state, and post-fusion hairpin state. During viral and target cell membrane fusion, the coiled coil regions (heptad repeats) assume a trimer-of-hairpins structure, positioning the fusion peptide in close proximity to the C-terminal region of the ectodomain. The formation of this structure appears to drive apposition and subsequent fusion of viral and target cell membranes. Its function is as follows. Acts as a viral fusion peptide which is unmasked following S2 cleavage occurring upon virus endocytosis. This is Spike glycoprotein from Bat coronavirus HKU4 (BtCoV).